A 1055-amino-acid chain; its full sequence is MAAAYLDPNLNHTPSSSTKTHLGTGTERSPGAMERVLKVFHYFESSNEPTTWASIIRHGDATDVRGIIQKIVDSHKVKHVACYGFRLSHLRSEEVHWLHVDMGVSSVREKYELAHPPEEWKYELRIRYLPKGFLNQFTEDKPTLNFFYQQVKSDYMLEIADQVDQDIALKLGCLEIRRSYWEMRGNALEKKSNYEVLEKDVGLKRFFPKSLLDSVKAKTLRKLIQQTFRQFANLNREESILKFFEILSPVYRFDKECFKCALGSSWIISVELAIGPEEGISYLTDKGCNPTHLADFNQVQTIQYSNSEDKDRKGMLQLKIAGAPEPLTVTAPSLTIAENMADLIDGYCRLVNGATQSFIIRPQKEGERALPSIPKLANNEKQGMRTHAVSVSETDDYAEIIDEEDTYTMPSTRDYEIQRERIELGRCIGEGQFGDVHQGVYLSPENPALAVAIKTCKNCTSDSVREKFLQEALTMRQFDHPHIVKLIGVITENPVWIIMELCTLGELRSFLQVRKYSLDLASLILYAYQLSTALAYLESKRFVHRDIAARNVLVSSNDCVKLGDFGLSRYMEDSTYYKASKGKLPIKWMAPESINFRRFTSASDVWMFGVCMWEILMHGVKPFQGVKNNDVIGRIENGERLPMPPNCPPTLYSLMTKCWAYDPSRRPRFTELKAQLSTILEEEKVQQEERMRMESRRQATVSWDSGGSDEAPPKPSRPGYPSPRSSEGFYPSPQHMVQTNHYQISGYPGSHGIPAMAGSIYPGQASLLDQTELWNHRPQEMSMWQPSVEDSAALDLRGMGQVLPPHLMEERLIRQQQEMEEDQRWLEKEERFLKPDVRLSRGSIDREDGSFQGPTGNQHIYQPVGKPDPAAPPKKPPRPGAPGHLSNLSSISSPAESYNEGVKPWRLQPQEISPPPTANLDRSNDKVYENVTGLVKAVIEMSSKIQPAPPEEYVPMVKEVGLALRTLLATVDETIPILPASTHREIEMAQKLLNSDLGELISKMKLAQQYVMTSLQQEYKKQMLTAAHALAVDAKNLLDVIDQARLKMLGQTRPH.

The interval 1–29 (MAAAYLDPNLNHTPSSSTKTHLGTGTERS) is disordered. An N-acetylalanine modification is found at Ala2. Tyr5 is modified (phosphotyrosine). Residues 10-27 (LNHTPSSSTKTHLGTGTE) are compositionally biased toward polar residues. Thr13 is subject to Phosphothreonine. Phosphoserine occurs at positions 29 and 54. Positions 35 to 355 (RVLKVFHYFE…GYCRLVNGAT (321 aa)) constitute an FERM domain. Lys152 participates in a covalent cross-link: Glycyl lysine isopeptide (Lys-Gly) (interchain with G-Cter in SUMO). Position 397 is a phosphotyrosine; by autocatalysis (Tyr397). Residue Tyr407 is modified to Phosphotyrosine. In terms of domain architecture, Protein kinase spans 422 to 680 (IELGRCIGEG…ELKAQLSTIL (259 aa)). Residues 428 to 434 (IGEGQFG), Lys454, and 500 to 502 (ELC) each bind ATP. Catalysis depends on Asp546, which acts as the Proton acceptor. Residues Tyr570 and Tyr576 each carry the phosphotyrosine modification. Residue Tyr577 is modified to Phosphotyrosine; by RET and SRC. Ser580 carries the phosphoserine modification. The span at 685–697 (VQQEERMRMESRR) shows a compositional bias: basic and acidic residues. Disordered regions lie at residues 685–734 (VQQE…PSPQ) and 837–923 (VRLS…LDRS). The interval 707–1055 (GSDEAPPKPS…LKMLGQTRPH (349 aa)) is interaction with TGFB1I1. Residue Ser722 is modified to Phosphoserine. Residue Ser732 is modified to Phosphoserine; by CDK5. Positions 837 to 849 (VRLSRGSIDREDG) are enriched in basic and acidic residues. Ser843 is modified (phosphoserine). Position 861 is a phosphotyrosine (Tyr861). Residues 869 to 880 (PAAPPKKPPRPG) show a composition bias toward pro residues. The segment covering 886–896 (SNLSSISSPAE) has biased composition (polar residues). The residue at position 913 (Ser913) is a Phosphoserine. The interval 915–1055 (PPTANLDRSN…LKMLGQTRPH (141 aa)) is interaction with ARHGEF28. Phosphothreonine is present on Thr917. Tyr928 is modified (phosphotyrosine).

Belongs to the protein kinase superfamily. Tyr protein kinase family. FAK subfamily. As to quaternary structure, interacts with GIT1. Component of a complex that contains at least FER, CTTN and PTK2/FAK1. Interacts with BMX. Interacts with STEAP4. Interacts with ZFYVE21. Interacts with ESR1. Interacts with PIK3R1 or PIK3R2. Interacts with FGR, FLT4 and RET. Interacts with EPHA2 in resting cells; activation of EPHA2 recruits PTPN11, leading to dephosphorylation of PTK2/FAK1 and dissociation of the complex. Interacts with EPHA1 (kinase activity-dependent). Interacts with P53/TP53. Interacts (via first Pro-rich region) with CAS family members (via SH3 domain), including BCAR1, BCAR3, and CASS4. Interacts with NEDD9 (via SH3 domain). Interacts with TGFB1I1. Interacts with SRC, GRB2 and GRB7. Interacts with ARHGEF28. Interacts with SHB. Part of a complex composed of THSD1, PTK2/FAK1, TLN1 and VCL. Interacts with PXN and TLN1. Interacts with SORBS1. Interacts with STAT1. Interacts with WASL. Interacts with ARHGAP26 and SHC1. Interacts with RB1CC1; this inhibits PTK2/FAK1 activity and activation of downstream signaling pathways. Interacts with ARHGEF7. Interacts with MDM2. Interacts with PIAS1. Interacts with DCC. Interacts with LPXN (via LD motif 3). Interacts with MISP. Interacts with EMP2; regulates PTK2 activation and localization. Interacts with DSCAM. Interacts with AMBRA1. Interacts (when tyrosine-phosphorylated) with tensin TNS1; the interaction is increased by phosphorylation of TNS1. Post-translationally, phosphorylated on tyrosine residues upon activation, e.g. upon integrin signaling. Tyr-397 is the major autophosphorylation site, but other kinases can also phosphorylate this residue. Phosphorylation at Tyr-397 promotes interaction with SRC and SRC family members, leading to phosphorylation at Tyr-576, Tyr-577 and at additional tyrosine residues. FGR promotes phosphorylation at Tyr-397 and Tyr-576. FER promotes phosphorylation at Tyr-577, Tyr-861 and Tyr-928, even when cells are not adherent. Tyr-397, Tyr-576 and Ser-722 are phosphorylated only when cells are adherent. Phosphorylation at Tyr-397 is important for interaction with BMX, PIK3R1 and SHC1. Phosphorylation at Tyr-928 is important for interaction with GRB2. Dephosphorylated by PTPN11; PTPN11 is recruited to PTK2 via EPHA2 (tyrosine phosphorylated). Microtubule-induced dephosphorylation at Tyr-397 is crucial for the induction of focal adhesion disassembly; this dephosphorylation could be catalyzed by PTPN11 and regulated by ZFYVE21. Phosphorylation on tyrosine residues is enhanced by NTN1. In terms of processing, sumoylated; this enhances autophosphorylation.

The protein localises to the cell junction. It localises to the focal adhesion. The protein resides in the cell membrane. Its subcellular location is the cytoplasm. It is found in the perinuclear region. The protein localises to the cell cortex. It localises to the cytoskeleton. The protein resides in the microtubule organizing center. Its subcellular location is the centrosome. It is found in the nucleus. The protein localises to the cilium basal body. It catalyses the reaction L-tyrosyl-[protein] + ATP = O-phospho-L-tyrosyl-[protein] + ADP + H(+). Its activity is regulated as follows. Subject to autoinhibition, mediated by interactions between the FERM domain and the kinase domain. Activated by autophosphorylation at Tyr-397. This promotes interaction with SRC and phosphorylation at Tyr-576 and Tyr-577 in the kinase activation loop by SRC. Phosphorylation at Tyr-397, Tyr-576 and Tyr-577 is required for maximal kinase activity. Its function is as follows. Non-receptor protein-tyrosine kinase that plays an essential role in regulating cell migration, adhesion, spreading, reorganization of the actin cytoskeleton, formation and disassembly of focal adhesions and cell protrusions, cell cycle progression, cell proliferation and apoptosis. Required for early embryonic development and placenta development. Required for embryonic angiogenesis, normal cardiomyocyte migration and proliferation, and normal heart development. Regulates axon growth and neuronal cell migration, axon branching and synapse formation; required for normal development of the nervous system. Plays a role in osteogenesis and differentiation of osteoblasts. Functions in integrin signal transduction, but also in signaling downstream of numerous growth factor receptors, G-protein coupled receptors (GPCR), EPHA2, netrin receptors and LDL receptors. Forms multisubunit signaling complexes with SRC and SRC family members upon activation; this leads to the phosphorylation of additional tyrosine residues, creating binding sites for scaffold proteins, effectors and substrates. Regulates numerous signaling pathways. Promotes activation of phosphatidylinositol 3-kinase and the AKT1 signaling cascade. Promotes activation of MAPK1/ERK2, MAPK3/ERK1 and the MAP kinase signaling cascade. Promotes localized and transient activation of guanine nucleotide exchange factors (GEFs) and GTPase-activating proteins (GAPs), and thereby modulates the activity of Rho family GTPases. Signaling via CAS family members mediates activation of RAC1. Phosphorylates NEDD9 following integrin stimulation. Recruits the ubiquitin ligase MDM2 to P53/TP53 in the nucleus, and thereby regulates P53/TP53 activity, P53/TP53 ubiquitination and proteasomal degradation. Phosphorylates SRC; this increases SRC kinase activity. Phosphorylates ACTN1, ARHGEF7, GRB7, RET and WASL. Promotes phosphorylation of PXN and STAT1; most likely PXN and STAT1 are phosphorylated by a SRC family kinase that is recruited to autophosphorylated PTK2/FAK1, rather than by PTK2/FAK1 itself. Promotes phosphorylation of BCAR1; GIT2 and SHC1; this requires both SRC and PTK2/FAK1. Promotes phosphorylation of BMX and PIK3R1. In terms of biological role, does not contain a kinase domain and inhibits PTK2/FAK1 phosphorylation and signaling. Its enhanced expression can attenuate the nuclear accumulation of LPXN and limit its ability to enhance serum response factor (SRF)-dependent gene transcription. The chain is Focal adhesion kinase 1 from Rattus norvegicus (Rat).